A 427-amino-acid polypeptide reads, in one-letter code: U1 small nuclear ribonucleoprotein 70 kDa (427 aa).

Disordered stretches follow at residues E82–R102 and R215–R427. Residues P93 to R102 are compositionally biased toward basic and acidic residues. In terms of domain architecture, RRM spans K138–G216. A compositionally biased stretch (gly residues) spans L227–E241. Basic and acidic residues-rich tracts occupy residues E257–K402 and R409–R427. S282 bears the Phosphoserine mark.

In terms of assembly, component of the spliceosome. Interacts with CYP63, U2AF35A, U2AF35B, SRZ21, RSZ22, SR34, SR45, SR45A and SCL33. Phosphorylated. The association and dissociation with SR45 is not affected by the phosphorylation status. Ubiquitous.

It localises to the nucleus speckle. Its subcellular location is the nucleus. The protein resides in the nucleoplasm. In terms of biological role, mediates the splicing of pre-mRNA by binding to the loop I region of U1-snRNA. The protein is U1 small nuclear ribonucleoprotein 70 kDa (RNU1) of Arabidopsis thaliana (Mouse-ear cress).